Reading from the N-terminus, the 146-residue chain is Snake venom vascular endothelial growth factor toxin (146 aa).

Residues 1 to 24 (MAAYLLAVAILFCIQGWPLGTVQG) form the signal peptide. Position 25 is a pyrrolidone carboxylic acid (Q25). 3 disulfides stabilise this stretch: C38/C80, C69/C115, and C73/C117. The segment at 118–146 (RPRSASGVNSRKHKRNPEEGEQRAKFPFV) is disordered. Positions 133-146 (NPEEGEQRAKFPFV) are enriched in basic and acidic residues.

This sequence belongs to the PDGF/VEGF growth factor family. Snake venom VEGF subfamily. In terms of assembly, homodimer; disulfide-linked. Interacts with VEGF receptor-1 (FLT1) with a high affinity, whereas it binds to VEGF receptor-2 (KDR) with a low affinity. Does not bind VEGF receptor-3 (FLT4). In terms of tissue distribution, expressed by the venom gland.

Its subcellular location is the secreted. Snake venom VEGFs that may contribute to venom dispersion and prey subjugation by inducing vascular permeability and hypotension. This protein induces an increase in capillary permeability after intradermal injection, as well as a drastic hypotensive effect after intravenous injection. The hypotension is mediated by nitric oxide (NO), which is produced by VEGF-activated endothelium NO synthase. Also induces angiogenesis in vitro. Like other crotalid VEGFs, this protein interacts with VEGF receptor-1 (FLT1) with a high affinity, whereas it binds to VEGF receptor-2 (KDR) with a low affinity. The polypeptide is Snake venom vascular endothelial growth factor toxin (Bothrops erythromelas (Caatinga lance head)).